The chain runs to 351 residues: Outer membrane porin PhoE (351 aa).

The signal sequence occupies residues 1–21 (MKKSTLALVVMGIVASASVQA).

It belongs to the Gram-negative porin family. Homotrimer. Forms mixed heterotrimers with OmpC and with OmpF; other mixed heterotrimers are also probable.

The protein resides in the cell outer membrane. Uptake of inorganic phosphate, phosphorylated compounds, and some other negatively charged solutes. This is Outer membrane porin PhoE (phoE) from Escherichia coli (strain K12).